The chain runs to 484 residues: Alkaline nuclease (484 aa).

The protein belongs to the herpesviridae alkaline nuclease family. Interacts with major DNA-binding protein; this interaction increases the nuclease processivity of the alkaline exonuclease.

It is found in the host nucleus. The protein localises to the host cytoplasm. In terms of biological role, plays a role in processing non linear or branched viral DNA intermediates in order to promote the production of mature packaged unit-length linear progeny viral DNA molecules. Exhibits endonuclease and exonuclease activities and accepts both double-stranded and single-stranded DNA as substrate. Exonuclease digestion of DNA is in the 5'-&gt; 3' direction and the products are 5'-monophosphate nucleosides. Additionally, forms a recombinase with the major DNA-binding protein, which displays strand exchange activity. The sequence is that of Alkaline nuclease from Elephas maximus (Indian elephant).